Reading from the N-terminus, the 141-residue chain is ATP synthase epsilon chain (141 aa).

This sequence belongs to the ATPase epsilon chain family. In terms of assembly, F-type ATPases have 2 components, CF(1) - the catalytic core - and CF(0) - the membrane proton channel. CF(1) has five subunits: alpha(3), beta(3), gamma(1), delta(1), epsilon(1). CF(0) has three main subunits: a, b and c.

Its subcellular location is the cell inner membrane. Produces ATP from ADP in the presence of a proton gradient across the membrane. The polypeptide is ATP synthase epsilon chain (Aromatoleum aromaticum (strain DSM 19018 / LMG 30748 / EbN1) (Azoarcus sp. (strain EbN1))).